The primary structure comprises 485 residues: Glutamyl-tRNA(Gln) amidotransferase subunit A (485 aa).

Residues Lys78 and Ser153 each act as charge relay system in the active site. The active-site Acyl-ester intermediate is the Ser177.

This sequence belongs to the amidase family. GatA subfamily. In terms of assembly, heterotrimer of A, B and C subunits.

The enzyme catalyses L-glutamyl-tRNA(Gln) + L-glutamine + ATP + H2O = L-glutaminyl-tRNA(Gln) + L-glutamate + ADP + phosphate + H(+). Allows the formation of correctly charged Gln-tRNA(Gln) through the transamidation of misacylated Glu-tRNA(Gln) in organisms which lack glutaminyl-tRNA synthetase. The reaction takes place in the presence of glutamine and ATP through an activated gamma-phospho-Glu-tRNA(Gln). In Bacillus anthracis (strain A0248), this protein is Glutamyl-tRNA(Gln) amidotransferase subunit A.